Reading from the N-terminus, the 144-residue chain is uncharacterized protein (144 aa).

A compositionally biased stretch (polar residues) spans 125 to 135; sequence PQQQNNHQLQS. Residues 125 to 144 form a disordered region; it reads PQQQNNHQLQSKPKAASISR.

This is an uncharacterized protein from Rickettsia prowazekii (strain Madrid E).